The chain runs to 243 residues: Lectin-4 (243 aa).

Pyrrolidone carboxylic acid is present on Gln1. An N-linked (GlcNAc...) asparagine; in alpha chain glycan is attached at Asn5. Residue Asn18 is glycosylated (N-linked (GlcNAc...) asparagine). Mn(2+) is bound by residues Glu129 and Asp131. The Ca(2+) site is built by Asp131, Trp133, Asn135, and Asp140. The Mn(2+) site is built by Asp140 and His145.

The protein belongs to the leguminous lectin family. Homodimer of Alpha and Beta forms. Post-translationally, N-glycosylation of Asn-5 converts form Beta to form Alpha.

In terms of biological role, lectin which has a strong affinity for both the Lewis b and y human blood-group determinants. In Griffonia simplicifolia (Bandeiraea simplicifolia), this protein is Lectin-4.